The primary structure comprises 497 residues: B3 domain-containing protein REM1 (497 aa).

3 DNA-binding regions (TF-B3) span residues 7 to 92, 142 to 239, and 278 to 379; these read PSLF…SSES, FLRA…LCSH, and FLTQ…HSKI. The tract at residues 87-135 is disordered; the sequence is AVSSESDDDESDDTDDSESDDESNDTDDSESDDSEDNGEGDSSLVNKEA. A compositionally biased stretch (acidic residues) spans 91-125; it reads ESDDDESDDTDDSESDDESNDTDDSESDDSEDNGE.

As to expression, specifically expressed in the reproductive meristem.

It localises to the nucleus. In terms of biological role, may play a role in flower development. This Brassica oleracea var. botrytis (Cauliflower) protein is B3 domain-containing protein REM1 (REM1).